A 483-amino-acid polypeptide reads, in one-letter code: Membrane-bound lytic murein transglycosylase F (483 aa).

Residues 1–18 form the signal peptide; it reads MKGLVIRISVALALLLWA. Residues 19-270 are non-LT domain; that stretch reads VDMVFPWQQI…RIEEKYFSHI (252 aa). Residues 272–483 are LT domain; the sequence is QFDYVDIKSY…IMITPQNSQD (212 aa). Glutamate 315 is an active-site residue.

This sequence in the N-terminal section; belongs to the bacterial solute-binding protein 3 family. It in the C-terminal section; belongs to the transglycosylase Slt family.

It is found in the cell outer membrane. It catalyses the reaction Exolytic cleavage of the (1-&gt;4)-beta-glycosidic linkage between N-acetylmuramic acid (MurNAc) and N-acetylglucosamine (GlcNAc) residues in peptidoglycan, from either the reducing or the non-reducing ends of the peptidoglycan chains, with concomitant formation of a 1,6-anhydrobond in the MurNAc residue.. Its function is as follows. Murein-degrading enzyme that degrades murein glycan strands and insoluble, high-molecular weight murein sacculi, with the concomitant formation of a 1,6-anhydromuramoyl product. Lytic transglycosylases (LTs) play an integral role in the metabolism of the peptidoglycan (PG) sacculus. Their lytic action creates space within the PG sacculus to allow for its expansion as well as for the insertion of various structures such as secretion systems and flagella. This is Membrane-bound lytic murein transglycosylase F from Actinobacillus succinogenes (strain ATCC 55618 / DSM 22257 / CCUG 43843 / 130Z).